Consider the following 2258-residue polypeptide: Genome polyprotein 1 (2258 aa).

Residues 439 to 597 enclose the Helicase ATP-binding domain; the sequence is SMAQEAKQWS…AVRRYEIKTV (159 aa). 487–494 serves as a coordination point for ATP; the sequence is RAATVNVT. The region spanning 612–778 is the Helicase C-terminal domain; sequence DKENSLYVLQ…GVQFYINEHF (167 aa). Tyrosine 1141 bears the O-(5'-phospho-RNA)-tyrosine mark. One can recognise a Peptidase C4 domain in the interval 1257 to 1476; the sequence is ATLEGMTMKP…TKPRNMQSAP (220 aa). Catalysis depends on for nuclear inclusion protein A activity residues histidine 1302, aspartate 1338, and cysteine 1405. The 125-residue stretch at 1745–1869 folds into the RdRp catalytic domain; that stretch reads WTHGSGDGSR…AMSPSFMVKF (125 aa). Disordered regions lie at residues 2027–2047 and 2233–2258; these read NMAA…RGTS and TSEQ…ALLR. Residues 2242–2258 are compositionally biased toward basic and acidic residues; the sequence is TETRRRNDYDGHEALLR.

It belongs to the bymoviruses polyprotein 1 family. Post-translationally, VPg is uridylylated by the polymerase and is covalently attached to the 5'-end of the genomic RNA. This uridylylated form acts as a nucleotide-peptide primer for the polymerase. The viral RNA1 of bymoviruses is expressed as a single polyprotein which undergoes post-translational proteolytic processing by the main proteinase NIa-pro resulting in the production of at least eight individual proteins.

The protein localises to the host cytoplasmic vesicle. The protein resides in the virion. It catalyses the reaction RNA(n) + a ribonucleoside 5'-triphosphate = RNA(n+1) + diphosphate. The catalysed reaction is Hydrolyzes glutaminyl bonds, and activity is further restricted by preferences for the amino acids in P6 - P1' that vary with the species of potyvirus, e.g. Glu-Xaa-Xaa-Tyr-Xaa-Gln-|-(Ser or Gly) for the enzyme from tobacco etch virus. The natural substrate is the viral polyprotein, but other proteins and oligopeptides containing the appropriate consensus sequence are also cleaved.. Its function is as follows. Indispensable for virus replication. Mediates the cap-independent, EIF4E-dependent translation of viral genomic RNAs. Binds to the cap-binding site of host EIF4E and thus interferes with the host EIF4E-dependent mRNA export and translation. VPg-RNA directly binds EIF4E and is a template for transcription. Also forms trimeric complexes with EIF4E-EIF4G, which are templates for translation. In terms of biological role, has RNA-binding and proteolytic activities. Functionally, an RNA-dependent RNA polymerase that plays an essential role in the virus replication. In Barley mild mosaic virus (strain Na1) (BaMMV), this protein is Genome polyprotein 1.